A 316-amino-acid chain; its full sequence is N-acetyl-gamma-glutamyl-phosphate reductase (316 aa).

Residue Cys-136 is part of the active site.

Belongs to the NAGSA dehydrogenase family. Type 1 subfamily.

It is found in the cytoplasm. The catalysed reaction is N-acetyl-L-glutamate 5-semialdehyde + phosphate + NADP(+) = N-acetyl-L-glutamyl 5-phosphate + NADPH + H(+). Its pathway is amino-acid biosynthesis; L-arginine biosynthesis; N(2)-acetyl-L-ornithine from L-glutamate: step 3/4. Functionally, catalyzes the NADPH-dependent reduction of N-acetyl-5-glutamyl phosphate to yield N-acetyl-L-glutamate 5-semialdehyde. This is N-acetyl-gamma-glutamyl-phosphate reductase from Xanthomonas oryzae pv. oryzae (strain MAFF 311018).